A 60-amino-acid chain; its full sequence is uncharacterized protein (60 aa).

This is an uncharacterized protein from Saccharomyces cerevisiae (strain ATCC 204508 / S288c) (Baker's yeast).